A 91-amino-acid polypeptide reads, in one-letter code: Small ribosomal subunit protein uS19 (91 aa).

Belongs to the universal ribosomal protein uS19 family.

Functionally, protein S19 forms a complex with S13 that binds strongly to the 16S ribosomal RNA. The sequence is that of Small ribosomal subunit protein uS19 from Pseudomonas putida (strain ATCC 700007 / DSM 6899 / JCM 31910 / BCRC 17059 / LMG 24140 / F1).